The following is a 119-amino-acid chain: Large ribosomal subunit protein uL18 (119 aa).

The protein belongs to the universal ribosomal protein uL18 family. In terms of assembly, part of the 50S ribosomal subunit; part of the 5S rRNA/L5/L18/L25 subcomplex. Contacts the 5S and 23S rRNAs.

Its function is as follows. This is one of the proteins that bind and probably mediate the attachment of the 5S RNA into the large ribosomal subunit, where it forms part of the central protuberance. In Sorangium cellulosum (strain So ce56) (Polyangium cellulosum (strain So ce56)), this protein is Large ribosomal subunit protein uL18.